The sequence spans 356 residues: MRKVLAIETSCDETSVSIVSNIGNTFKIHSNIIASQIEDHSKWGGVVPELAARKHLELLPFVLEKALTESKIKIEEVDYIASTVAPGLVGCLRVGSITARSLCMLHSKPFLGIHHLEGHLSSILFSENYPKKSFLTLLVSGGHTELIKVDDRRGMQRLGKSFDDAAGEAFDKVGRLLGLSYPGGPAIEKIAKNGDPMKFNLPKCRISDKKGGFLKYDFSFSGLKTAVLRLVEKINLDGKTVPVPDIAASFERVVAEVLVERTIRCAEDHSLDNVVVVGGVAANNTLRKMMISEANKKSIKVHLAPLNLCTDNAAMIGAAALFRIKFKDHLSSLKLGVSGRLSIEQANTLYEENPPF.

Positions 115 and 119 each coordinate Fe cation. Substrate contacts are provided by residues 138 to 142 (LVSGG), aspartate 171, glycine 184, and asparagine 283. Residue aspartate 311 participates in Fe cation binding.

It belongs to the KAE1 / TsaD family. Requires Fe(2+) as cofactor.

Its subcellular location is the cytoplasm. It catalyses the reaction L-threonylcarbamoyladenylate + adenosine(37) in tRNA = N(6)-L-threonylcarbamoyladenosine(37) in tRNA + AMP + H(+). Functionally, required for the formation of a threonylcarbamoyl group on adenosine at position 37 (t(6)A37) in tRNAs that read codons beginning with adenine. Is involved in the transfer of the threonylcarbamoyl moiety of threonylcarbamoyl-AMP (TC-AMP) to the N6 group of A37, together with TsaE and TsaB. TsaD likely plays a direct catalytic role in this reaction. This is tRNA N6-adenosine threonylcarbamoyltransferase from Prochlorococcus marinus (strain MIT 9312).